A 258-amino-acid chain; its full sequence is UPF0758 protein Bcep1808_2579 (258 aa).

In terms of domain architecture, MPN spans 136–258 (PIDSPGAVED…TFSFARAGWL (123 aa)). Residues H207, H209, and D220 each coordinate Zn(2+). The short motif at 207 to 220 (HNHPSGAVQPSAED) is the JAMM motif element.

It belongs to the UPF0758 family.

This Burkholderia vietnamiensis (strain G4 / LMG 22486) (Burkholderia cepacia (strain R1808)) protein is UPF0758 protein Bcep1808_2579.